The sequence spans 144 residues: FK506-binding protein 2 (144 aa).

The first 20 residues, 1–20 (MARIIVLIVAFMALIAGVFA), serve as a signal peptide directing secretion. One can recognise a PPIase FKBP-type domain in the interval 48–136 (GDTVSVHYTG…IFTTELVSID (89 aa)). The Prevents secretion from ER signature appears at 141–144 (RDEL).

The protein belongs to the FKBP-type PPIase family. FKBP2 subfamily.

Its subcellular location is the endoplasmic reticulum. It carries out the reaction [protein]-peptidylproline (omega=180) = [protein]-peptidylproline (omega=0). Inhibited by both FK506 and rapamycin. In terms of biological role, PPIases accelerate the folding of proteins. It catalyzes the cis-trans isomerization of proline imidic peptide bonds in oligopeptides. In Yarrowia lipolytica (strain CLIB 122 / E 150) (Yeast), this protein is FK506-binding protein 2 (FPR2).